A 213-amino-acid chain; its full sequence is Kynurenine formamidase (213 aa).

Substrate is bound at residue Trp-20. Residues His-50, His-54, and Asp-56 each contribute to the Zn(2+) site. The active-site Proton donor/acceptor is His-60. Residues His-161 and Glu-173 each coordinate Zn(2+).

The protein belongs to the Cyclase 1 superfamily. KynB family. Homodimer. The cofactor is Zn(2+).

It catalyses the reaction N-formyl-L-kynurenine + H2O = L-kynurenine + formate + H(+). The protein operates within amino-acid degradation; L-tryptophan degradation via kynurenine pathway; L-kynurenine from L-tryptophan: step 2/2. Functionally, catalyzes the hydrolysis of N-formyl-L-kynurenine to L-kynurenine, the second step in the kynurenine pathway of tryptophan degradation. This Pseudomonas paraeruginosa (strain DSM 24068 / PA7) (Pseudomonas aeruginosa (strain PA7)) protein is Kynurenine formamidase.